We begin with the raw amino-acid sequence, 429 residues long: Histidinol dehydrogenase (429 aa).

Positions 130, 191, and 214 each coordinate NAD(+). Residues Ser237, Gln259, and His262 each coordinate substrate. Gln259 and His262 together coordinate Zn(2+). Residues Glu327 and His328 each act as proton acceptor in the active site. Residues His328, Asp361, Glu415, and His420 each coordinate substrate. Asp361 provides a ligand contact to Zn(2+). Residue His420 participates in Zn(2+) binding.

It belongs to the histidinol dehydrogenase family. Zn(2+) is required as a cofactor.

It carries out the reaction L-histidinol + 2 NAD(+) + H2O = L-histidine + 2 NADH + 3 H(+). The protein operates within amino-acid biosynthesis; L-histidine biosynthesis; L-histidine from 5-phospho-alpha-D-ribose 1-diphosphate: step 9/9. In terms of biological role, catalyzes the sequential NAD-dependent oxidations of L-histidinol to L-histidinaldehyde and then to L-histidine. This chain is Histidinol dehydrogenase, found in Neisseria meningitidis serogroup B (strain ATCC BAA-335 / MC58).